We begin with the raw amino-acid sequence, 372 residues long: Cytochrome b (372 aa).

4 helical membrane passes run 25–45, 69–90, 105–125, and 170–190; these read FGSMLLTCLALQTMTGFFLAI, WIMQNIHAISASLFFICIYIHI, WLSGTTLLITLMATAFFGYVL, and FFALHFILPFAIISLSSIHII. Heme b is bound by residues His-75 and His-89. Residues His-174 and His-188 each coordinate heme b. Residue His-193 coordinates a ubiquinone. Transmembrane regions (helical) follow at residues 218–238, 280–300, 312–332, and 339–358; these read YKDMLMITSMITLLFIILSFS, LGGTLALLTSVAILTTVPFTH, LSQALFWTLIATFITITWTAS, and FVTISQTTSIIYFSFFITIP.

This sequence belongs to the cytochrome b family. As to quaternary structure, the cytochrome bc1 complex contains 3 respiratory subunits (MT-CYB, CYC1 and UQCRFS1), 2 core proteins (UQCRC1 and UQCRC2) and probably 6 low-molecular weight proteins. Heme b serves as cofactor.

The protein resides in the mitochondrion inner membrane. In terms of biological role, component of the ubiquinol-cytochrome c reductase complex (complex III or cytochrome b-c1 complex) that is part of the mitochondrial respiratory chain. The b-c1 complex mediates electron transfer from ubiquinol to cytochrome c. Contributes to the generation of a proton gradient across the mitochondrial membrane that is then used for ATP synthesis. This is Cytochrome b (MT-CYB) from Naja multifasciata (Burrowing cobra).